A 175-amino-acid polypeptide reads, in one-letter code: Peptide deformylase (175 aa).

The Fe cation site is built by C99 and H141. E142 is an active-site residue. H145 serves as a coordination point for Fe cation.

Belongs to the polypeptide deformylase family. Fe(2+) is required as a cofactor.

It catalyses the reaction N-terminal N-formyl-L-methionyl-[peptide] + H2O = N-terminal L-methionyl-[peptide] + formate. Its function is as follows. Removes the formyl group from the N-terminal Met of newly synthesized proteins. Requires at least a dipeptide for an efficient rate of reaction. N-terminal L-methionine is a prerequisite for activity but the enzyme has broad specificity at other positions. The sequence is that of Peptide deformylase from Rickettsia canadensis (strain McKiel).